Reading from the N-terminus, the 1202-residue chain is Putative late blight resistance protein homolog R1B-8 (1202 aa).

2 coiled-coil regions span residues 345 to 368 and 437 to 459; these read RYSD…ESLQ and LRMN…RLLN. The 316-residue stretch at 426 to 741 folds into the NB-ARC domain; it reads IARTSSQLAR…ISESFIKSCE (316 aa). 471 to 478 contacts ATP; sequence GMPGLGKT. 7 LRR repeats span residues 865–889, 908–936, 1011–1036, 1040–1059, 1060–1084, 1086–1111, and 1128–1151; these read FKFL…LFYL, LWNL…VWDM, PIRL…ISAP, YLKL…TADH, LKHL…VSNG, FPQL…VFPN, and SCFM…VVQS.

The protein belongs to the disease resistance NB-LRR family.

Its subcellular location is the cytoplasm. The protein localises to the membrane. Confers resistance to late blight (Phytophthora infestans) races carrying the avirulence gene Avr1. Resistance proteins guard the plant against pathogens that contain an appropriate avirulence protein via an indirect interaction with this avirulence protein. That triggers a defense system including the hypersensitive response, which restricts the pathogen growth. This Solanum demissum (Wild potato) protein is Putative late blight resistance protein homolog R1B-8 (R1B-8).